We begin with the raw amino-acid sequence, 117 residues long: uncharacterized protein (117 aa).

This is an uncharacterized protein from Pasteurella multocida (strain Pm70).